The chain runs to 244 residues: Ubiquinone/menaquinone biosynthesis C-methyltransferase UbiE (244 aa).

S-adenosyl-L-methionine is bound by residues Thr70, Asp91, and 117–118 (DA).

The protein belongs to the class I-like SAM-binding methyltransferase superfamily. MenG/UbiE family.

It carries out the reaction a 2-demethylmenaquinol + S-adenosyl-L-methionine = a menaquinol + S-adenosyl-L-homocysteine + H(+). The enzyme catalyses a 2-methoxy-6-(all-trans-polyprenyl)benzene-1,4-diol + S-adenosyl-L-methionine = a 5-methoxy-2-methyl-3-(all-trans-polyprenyl)benzene-1,4-diol + S-adenosyl-L-homocysteine + H(+). Its pathway is quinol/quinone metabolism; menaquinone biosynthesis; menaquinol from 1,4-dihydroxy-2-naphthoate: step 2/2. It functions in the pathway cofactor biosynthesis; ubiquinone biosynthesis. Methyltransferase required for the conversion of demethylmenaquinol (DMKH2) to menaquinol (MKH2) and the conversion of 2-polyprenyl-6-methoxy-1,4-benzoquinol (DDMQH2) to 2-polyprenyl-3-methyl-6-methoxy-1,4-benzoquinol (DMQH2). The sequence is that of Ubiquinone/menaquinone biosynthesis C-methyltransferase UbiE from Nitrosospira multiformis (strain ATCC 25196 / NCIMB 11849 / C 71).